The primary structure comprises 72 residues: Defensin-like protein 230 (72 aa).

The first 27 residues, 1–27 (MEKKSLACLSFLLLVLFVAQEIVVSEA), serve as a signal peptide directing secretion. 4 disulfides stabilise this stretch: C30/C72, C41/C60, C45/C66, and C49/C68.

This sequence belongs to the DEFL family.

The protein localises to the secreted. In Pisum sativum (Garden pea), this protein is Defensin-like protein 230 (PI230).